A 190-amino-acid chain; its full sequence is MIGRISGQLAEKNPPEVLVDCNGVGYEVLVPMSTFYNLPGLGEKVSLLTHFVVREDAQILYGFGSATERAAFRQLIKISGVGPRTALSVLSGMSVEELAQAVTHQEAGRIIKVPGIGKKTAERLLLELKGKLGADIGVQVSVSSDSQSDILQALVALGYSDRDAALALKALPKDIGVSDGIKLALKALAK.

Residues 1-64 (MIGRISGQLA…EDAQILYGFG (64 aa)) form a domain I region. The segment at 65–137 (SATERAAFRQ…LKGKLGADIG (73 aa)) is domain II. The segment at 137–141 (GVQVS) is flexible linker. The tract at residues 142–190 (VSSDSQSDILQALVALGYSDRDAALALKALPKDIGVSDGIKLALKALAK) is domain III.

This sequence belongs to the RuvA family. As to quaternary structure, homotetramer. Forms an RuvA(8)-RuvB(12)-Holliday junction (HJ) complex. HJ DNA is sandwiched between 2 RuvA tetramers; dsDNA enters through RuvA and exits via RuvB. An RuvB hexamer assembles on each DNA strand where it exits the tetramer. Each RuvB hexamer is contacted by two RuvA subunits (via domain III) on 2 adjacent RuvB subunits; this complex drives branch migration. In the full resolvosome a probable DNA-RuvA(4)-RuvB(12)-RuvC(2) complex forms which resolves the HJ.

It localises to the cytoplasm. In terms of biological role, the RuvA-RuvB-RuvC complex processes Holliday junction (HJ) DNA during genetic recombination and DNA repair, while the RuvA-RuvB complex plays an important role in the rescue of blocked DNA replication forks via replication fork reversal (RFR). RuvA specifically binds to HJ cruciform DNA, conferring on it an open structure. The RuvB hexamer acts as an ATP-dependent pump, pulling dsDNA into and through the RuvAB complex. HJ branch migration allows RuvC to scan DNA until it finds its consensus sequence, where it cleaves and resolves the cruciform DNA. The protein is Holliday junction branch migration complex subunit RuvA of Polaromonas sp. (strain JS666 / ATCC BAA-500).